A 402-amino-acid chain; its full sequence is Multidrug resistance protein MdtH (402 aa).

The next 11 helical transmembrane spans lie at 13–33 (YFLL…FPLI), 34–54 (SIRF…ALGL), 99–116 (PWVL…GTLF), 139–159 (ILMM…SWLL), 165–185 (LVCS…AWYL), 214–234 (VLTL…LPIM), 243–263 (AAVK…LYPI), 277–297 (LMAG…TSSL), 300–320 (LFTL…ARET), 340–360 (LGLA…FDAG), and 369–389 (PWLM…WQFS).

It belongs to the major facilitator superfamily. DHA1 family. MdtH (TC 2.A.1.2.21) subfamily.

It is found in the cell inner membrane. The chain is Multidrug resistance protein MdtH from Klebsiella pneumoniae subsp. pneumoniae (strain ATCC 700721 / MGH 78578).